The primary structure comprises 142 residues: Deoxyuridine 5'-triphosphate nucleotidohydrolase (142 aa).

Belongs to the dUTPase family. Mg(2+) is required as a cofactor.

It carries out the reaction dUTP + H2O = dUMP + diphosphate + H(+). Functionally, this enzyme is involved in nucleotide metabolism: it produces dUMP, the immediate precursor of thymidine nucleotides and it decreases the intracellular concentration of dUTP so that uracil cannot be incorporated into DNA. In Swinepox virus (strain Kasza) (SWPV), this protein is Deoxyuridine 5'-triphosphate nucleotidohydrolase (DUT).